The sequence spans 69 residues: MAEMKTGDIRAMSDDQMDDAILNLKKERFNLRFQRATGQLEDTSRLREARRDIARIKTIAAQKRAGKTK.

Belongs to the universal ribosomal protein uL29 family.

The polypeptide is Large ribosomal subunit protein uL29 (Rhodopseudomonas palustris (strain BisB5)).